We begin with the raw amino-acid sequence, 89 residues long: Small ribosomal subunit protein uS15 (89 aa).

It belongs to the universal ribosomal protein uS15 family. Part of the 30S ribosomal subunit. Forms a bridge to the 50S subunit in the 70S ribosome, contacting the 23S rRNA.

Its function is as follows. One of the primary rRNA binding proteins, it binds directly to 16S rRNA where it helps nucleate assembly of the platform of the 30S subunit by binding and bridging several RNA helices of the 16S rRNA. Forms an intersubunit bridge (bridge B4) with the 23S rRNA of the 50S subunit in the ribosome. This chain is Small ribosomal subunit protein uS15, found in Bifidobacterium animalis subsp. lactis (strain AD011).